The primary structure comprises 312 residues: Ribosomal protein L11 methyltransferase (312 aa).

S-adenosyl-L-methionine-binding residues include threonine 160, glycine 181, aspartate 203, and asparagine 246.

Belongs to the methyltransferase superfamily. PrmA family.

It is found in the cytoplasm. The catalysed reaction is L-lysyl-[protein] + 3 S-adenosyl-L-methionine = N(6),N(6),N(6)-trimethyl-L-lysyl-[protein] + 3 S-adenosyl-L-homocysteine + 3 H(+). Its function is as follows. Methylates ribosomal protein L11. This Staphylococcus carnosus (strain TM300) protein is Ribosomal protein L11 methyltransferase.